The primary structure comprises 355 residues: Putative testis-specific Y-encoded-like protein 3 (355 aa).

The interval 1-131 (MADKRAGTPE…GEEKQEVAAE (131 aa)) is disordered. Residues 93-128 (ASEKAEDANKEEGAIFKKEPAEEVEKQQEGEEKQEV) show a composition bias toward basic and acidic residues.

It belongs to the nucleosome assembly protein (NAP) family.

The chain is Putative testis-specific Y-encoded-like protein 3 (TSPY26P) from Homo sapiens (Human).